Reading from the N-terminus, the 190-residue chain is Threonylcarbamoyl-AMP synthase (190 aa).

In terms of domain architecture, YrdC-like spans 10–190 (PQDKESVYRH…DWHSRQVIRA (181 aa)).

This sequence belongs to the SUA5 family. TsaC subfamily.

It localises to the cytoplasm. The catalysed reaction is L-threonine + hydrogencarbonate + ATP = L-threonylcarbamoyladenylate + diphosphate + H2O. In terms of biological role, required for the formation of a threonylcarbamoyl group on adenosine at position 37 (t(6)A37) in tRNAs that read codons beginning with adenine. Catalyzes the conversion of L-threonine, HCO(3)(-)/CO(2) and ATP to give threonylcarbamoyl-AMP (TC-AMP) as the acyladenylate intermediate, with the release of diphosphate. This is Threonylcarbamoyl-AMP synthase from Dichelobacter nodosus (strain VCS1703A).